Reading from the N-terminus, the 554-residue chain is Phosphomethylpyrimidine synthase (554 aa).

Residues asparagine 188, methionine 217, tyrosine 246, histidine 282, 302–304 (SRG), 343–346 (DGLR), and glutamate 382 contribute to the substrate site. Histidine 386 contacts Zn(2+). Position 409 (tyrosine 409) interacts with substrate. Histidine 450 contacts Zn(2+). 3 residues coordinate [4Fe-4S] cluster: cysteine 530, cysteine 533, and cysteine 538.

Belongs to the ThiC family. Homodimer. [4Fe-4S] cluster is required as a cofactor.

It catalyses the reaction 5-amino-1-(5-phospho-beta-D-ribosyl)imidazole + S-adenosyl-L-methionine = 4-amino-2-methyl-5-(phosphooxymethyl)pyrimidine + CO + 5'-deoxyadenosine + formate + L-methionine + 3 H(+). Its pathway is cofactor biosynthesis; thiamine diphosphate biosynthesis. Functionally, catalyzes the synthesis of the hydroxymethylpyrimidine phosphate (HMP-P) moiety of thiamine from aminoimidazole ribotide (AIR) in a radical S-adenosyl-L-methionine (SAM)-dependent reaction. This chain is Phosphomethylpyrimidine synthase, found in Coxiella burnetii (strain CbuK_Q154) (Coxiella burnetii (strain Q154)).